The primary structure comprises 148 residues: MRLNDVKPQKGSKKRRRRVGRGISAGQGASAGLGMRGQKSRSGSGTRPGFEGGQQPLYRRIPKLKGFPVVNRKIYTTINVEKLADLPANTEVTLESLRAAGILTAAKGPLKILGNGDLGVALNVKAAAFTGQARSKIEAAGGSCEVLG.

Residues 1–57 (MRLNDVKPQKGSKKRRRRVGRGISAGQGASAGLGMRGQKSRSGSGTRPGFEGGQQPL) are disordered. Over residues 10–20 (KGSKKRRRRVG) the composition is skewed to basic residues. The segment covering 23–35 (ISAGQGASAGLGM) has biased composition (gly residues).

The protein belongs to the universal ribosomal protein uL15 family. As to quaternary structure, part of the 50S ribosomal subunit.

In terms of biological role, binds to the 23S rRNA. This is Large ribosomal subunit protein uL15 from Nostoc sp. (strain PCC 7120 / SAG 25.82 / UTEX 2576).